A 455-amino-acid chain; its full sequence is Folate transporter 2 (455 aa).

8 helical membrane-spanning segments follow: residues 42–64 (IVVYLVGLSDGLTHLASLAIYYL), 84–103 (YIPFILKPVIALITDSFSIF), 110–131 (YLFLFSLFQSLNFLALAFLNLS), 137–157 (LILFFISLCASFCTTVAEALV), 177–195 (IASKAIGSLSVAYFSGYFL), 201–221 (EYIFIATSIFPLIISLSCLFL), 242–261 (FINTPIFLGPFLYIFVYMSG), and 281–301 (SFMGTLRLTYGIASLIGIIIY). N-linked (GlcNAc...) asparagine glycosylation occurs at N307. Helical transmembrane passes span 313-331 (TLIITTLVSFPIYISPIIL) and 347-367 (VLSGGFLIEAITEIQLLPLFI). N-linked (GlcNAc...) asparagine glycosylation occurs at N416. Residues 417–438 (LSLYILTCGFFLLFSLTLVPLL) form a helical membrane-spanning segment.

This sequence belongs to the major facilitator superfamily. Folate-biopterin transporter (TC 2.A.71) family.

The protein localises to the cell membrane. It carries out the reaction folate(in) + H(+)(in) = folate(out) + H(+)(out). It catalyses the reaction (6S)-5-methyl-5,6,7,8-tetrahydrofolate(in) + H(+)(in) = (6S)-5-methyl-5,6,7,8-tetrahydrofolate(out) + H(+)(out). Transport of folates is inhibited by probenecid and methotrexate. Functionally, folate transporter with broad substrate specificity. Transports folic acid, folinic acid, pteroic acid, dihydropteroic acid, the folate precursor p-amino benzoic acid (pABA) and the human folate catabolite pABA monoglutamate. Can transport 5-methyltetrahydrofolate with low efficiency. The polypeptide is Folate transporter 2 (Plasmodium falciparum (isolate 3D7)).